The sequence spans 359 residues: DNA polymerase IV (359 aa).

The UmuC domain maps to 4–184 (IVHVDMDAFY…LKVNRIPGVG (181 aa)). Mg(2+)-binding residues include D8 and D102. E103 is an active-site residue.

Belongs to the DNA polymerase type-Y family. In terms of assembly, monomer. Mg(2+) serves as cofactor.

The protein localises to the cytoplasm. The enzyme catalyses DNA(n) + a 2'-deoxyribonucleoside 5'-triphosphate = DNA(n+1) + diphosphate. Functionally, poorly processive, error-prone DNA polymerase involved in untargeted mutagenesis. Copies undamaged DNA at stalled replication forks, which arise in vivo from mismatched or misaligned primer ends. These misaligned primers can be extended by PolIV. Exhibits no 3'-5' exonuclease (proofreading) activity. May be involved in translesional synthesis, in conjunction with the beta clamp from PolIII. In Xanthomonas oryzae pv. oryzae (strain MAFF 311018), this protein is DNA polymerase IV.